Reading from the N-terminus, the 301-residue chain is m7GpppX diphosphatase (301 aa).

Substrate contacts are provided by residues Glu-154, Lys-176, and 237–248 (HYQPSFYHLHVH). Positions 244 to 248 (HLHVH) match the Histidine triad motif motif. Catalysis depends on His-246, which acts as the Nucleophile.

This sequence belongs to the HIT family.

Its subcellular location is the nucleus. The catalysed reaction is a 5'-end (N(7)-methyl 5'-triphosphoguanosine)-ribonucleoside in mRNA + H2O = N(7)-methyl-GMP + a 5'-end diphospho-ribonucleoside in mRNA + 2 H(+). It carries out the reaction a 5'-end (N(2),N(2),N(7)-trimethyl 5'-triphosphoguanosine)-ribonucleoside in mRNA + H2O = (N(2),N(2),N(7))-trimethyl-GMP + a 5'-end diphospho-ribonucleoside in mRNA + 2 H(+). The hydrolytic product 7-methylguanosine diphosphate (m7GDP) efficiently inhibits the decapping scavenger activity and acts as a competitive inhibitor in vitro. In terms of biological role, decapping scavenger enzyme that catalyzes the cleavage of a residual cap structure following the degradation of mRNAs of the 3'-&gt;5' exosome-mediated mRNA decay pathway. Hydrolyzes cap analog structures like 7-methylguanosine nucleoside triphosphate (m7GpppG) and tri-methyl guanosine nucleoside triphosphate (m3(2,2,7)GpppG) with up to 2 nucleotide substrates (small capped oligoribonucleotides) and specifically releases 5'-phosphorylated RNA fragments and 7-methylguanosine monophosphate (m7GMP). Does not hydrolyze unmethylated cap analog (GpppG) and shows no decapping activity on intact m7GpppG-capped mRNA molecules. Does not hydrolyze 7-methylguanosine diphosphate (m7GDP) and tri-methylguanosine diphosphate (m3(2,2,7)GDP) to m(7)GMP and m3(2,2,7)GMP, respectively. May also play a role in the 5'-&gt;3 mRNA decay pathway; m7GDP, the downstream product released by the 5'-&gt;3' mRNA mediated decapping activity, may be also converted by dcs-1 to m7GMP. Binds to m7GpppG and strongly to m7GDP. The sequence is that of m7GpppX diphosphatase from Ascaris suum (Pig roundworm).